Consider the following 267-residue polypeptide: MSNKVHLGHTARKRFGQNFLTDGNIINRIVGAISPDDDHVMVEIGPGLAALTEPVAMGIKNLTVIELDRDLAERLKVHPTLKDKLTIHQGDAMKFDFSQLVEPERKLKVFGNLPYNISTPLMFHLFEFAEHIENMHFMLQKEVVLRLSASPGTKAYGKLTVMAQYYCQVVPVLEVPPGCFTPPPKVDSAVVRLVPYAEKPWPCHDVEMLRKVCNTAFNMRRKTLRNNLKPLLQDADFDVLGIDAGLRPEDISVAQYVAMANYLCEKR.

The S-adenosyl-L-methionine site is built by Asn18, Leu20, Gly45, Glu66, Asp91, and Asn112.

Belongs to the class I-like SAM-binding methyltransferase superfamily. rRNA adenine N(6)-methyltransferase family. RsmA subfamily.

The protein localises to the cytoplasm. The catalysed reaction is adenosine(1518)/adenosine(1519) in 16S rRNA + 4 S-adenosyl-L-methionine = N(6)-dimethyladenosine(1518)/N(6)-dimethyladenosine(1519) in 16S rRNA + 4 S-adenosyl-L-homocysteine + 4 H(+). Its function is as follows. Specifically dimethylates two adjacent adenosines (A1518 and A1519) in the loop of a conserved hairpin near the 3'-end of 16S rRNA in the 30S particle. May play a critical role in biogenesis of 30S subunits. The protein is Ribosomal RNA small subunit methyltransferase A of Shewanella amazonensis (strain ATCC BAA-1098 / SB2B).